Here is a 122-residue protein sequence, read N- to C-terminus: Large ribosomal subunit protein uL14 (122 aa).

The protein belongs to the universal ribosomal protein uL14 family. Part of the 50S ribosomal subunit. Forms a cluster with proteins L3 and L19. In the 70S ribosome, L14 and L19 interact and together make contacts with the 16S rRNA in bridges B5 and B8.

Its function is as follows. Binds to 23S rRNA. Forms part of two intersubunit bridges in the 70S ribosome. This chain is Large ribosomal subunit protein uL14, found in Roseiflexus castenholzii (strain DSM 13941 / HLO8).